The following is a 361-amino-acid chain: DNA replication and repair protein RecF (361 aa).

30–37 is an ATP binding site; sequence GANGSGKT.

Belongs to the RecF family.

The protein localises to the cytoplasm. Its function is as follows. The RecF protein is involved in DNA metabolism; it is required for DNA replication and normal SOS inducibility. RecF binds preferentially to single-stranded, linear DNA. It also seems to bind ATP. The sequence is that of DNA replication and repair protein RecF from Glaesserella parasuis serovar 5 (strain SH0165) (Haemophilus parasuis).